The chain runs to 266 residues: Undecaprenyl-diphosphatase (266 aa).

The next 7 membrane-spanning stretches (helical) occupy residues 41–61 (YAYSLGLFLEAASVLAALIYF), 82–102 (LVYILVTTLVTAVVGLPLYYV), 106–126 (WLVVGHSAGFLMIVLGLAVVL), 159–179 (AVSVLPGLSRSGATVTALLLL), 191–211 (FVLVPVAGLGATALAYLSEGG), 213–233 (VATAEALLAMAIGIVISIITI), and 246–266 (VLVNVVIGLLAIAGGLLRIIF).

It belongs to the UppP family.

It is found in the cell membrane. The catalysed reaction is di-trans,octa-cis-undecaprenyl diphosphate + H2O = di-trans,octa-cis-undecaprenyl phosphate + phosphate + H(+). In terms of biological role, catalyzes the dephosphorylation of undecaprenyl diphosphate (UPP). This Pyrobaculum aerophilum (strain ATCC 51768 / DSM 7523 / JCM 9630 / CIP 104966 / NBRC 100827 / IM2) protein is Undecaprenyl-diphosphatase.